A 380-amino-acid polypeptide reads, in one-letter code: Opsin-2 (380 aa).

The Extracellular segment spans residues 1 to 51 (MVNTTDFYPVPAAMAYESSVGLPLLGWNVPTEHLDLVHPHWRSFQVPNKYW). An N-linked (GlcNAc...) asparagine glycan is attached at Asn3. The helical transmembrane segment at 52–76 (HFGLAFVYFMLMCMSSLGNGIVLWI) threads the bilayer. Over 77 to 88 (YATTKSIRTPSN) the chain is Cytoplasmic. The chain crosses the membrane as a helical span at residues 89–115 (MFIVNLALFDVLMLLEMPMLVVSSLFY). At 116-128 (QRPVGWELGCDIY) the chain is on the extracellular side. The cysteines at positions 125 and 202 are disulfide-linked. A helical membrane pass occupies residues 129-148 (AALGSVAGIGSAINNAAIAF). Residues 149–166 (DRYRTISCPIDGRLTQGQ) are Cytoplasmic-facing. The helical transmembrane segment at 167–191 (VLALIAGTWVWTLPFTLMPLLRIWS) threads the bilayer. Over 192 to 215 (RFTAEGFLTTCSFDYLTDDEDTKV) the chain is Extracellular. The chain crosses the membrane as a helical span at residues 216–243 (FVGCIFAWSYAFPLCLICCFYYRLIGAV). Topologically, residues 244–279 (REHEKMLRDQAKKMNVKSLQSNADTEAQSAEIRIAK) are cytoplasmic. A helical membrane pass occupies residues 280–303 (VALTIFFLFLCSWTPYAVVAMIGA). Residues 304-311 (FGNRAALT) are Extracellular-facing. A helical membrane pass occupies residues 312–336 (PLSTMIPAVTAKIVSCIDPWVYAIN). An N6-(retinylidene)lysine modification is found at Lys323. At 337–380 (HPRFRAEVQKRMKWLHLGEDARSSKSDTSSTATDRTVGNVSASA) the chain is on the cytoplasmic side. Residues 358–380 (RSSKSDTSSTATDRTVGNVSASA) are disordered. The segment covering 362 to 372 (SDTSSTATDRT) has biased composition (low complexity).

It belongs to the G-protein coupled receptor 1 family. Opsin subfamily. Post-translationally, phosphorylated on some or all of the serine and threonine residues present in the C-terminal region.

Its subcellular location is the membrane. Its function is as follows. Visual pigments are the light-absorbing molecules that mediate vision. They consist of an apoprotein, opsin, covalently linked to cis-retinal. This is Opsin-2 (Lo2) from Schistocerca gregaria (Desert locust).